The chain runs to 460 residues: Hemopexin (460 aa).

An N-terminal signal peptide occupies residues 1 to 23 (MARTVVALNILVLLGLCWSLAVA). 2 N-linked (GlcNAc...) asparagine glycosylation sites follow: Asn-38 and Asn-64. Intrachain disulfides connect Cys-50/Cys-230, Cys-148/Cys-153, and Cys-187/Cys-199. Hemopexin repeat units lie at residues 53–93 (AWSF…WKNP), 94–138 (VTSV…FPGI), 139–183 (PYPP…SWPA), and 184–230 (VGNC…FISC). His-79 is a heme binding site. His-149 contributes to the heme binding site. Asn-186 carries an N-linked (GlcNAc...) asparagine glycan. Position 235 (His-235) interacts with heme. N-linked (GlcNAc...) asparagine glycosylation is found at Asn-240 and Asn-246. Intrachain disulfides connect Cys-255–Cys-458, Cys-364–Cys-406, and Cys-416–Cys-433. Hemopexin repeat units follow at residues 257–302 (ADPG…WPQG), 303–350 (PSAV…LGSP), 355–394 (LDTI…WAEL), and 398–448 (HEKV…SLPQ). Position 291 (His-291) interacts with heme.

The protein belongs to the hemopexin family. Expressed by the liver and secreted in plasma.

The protein localises to the secreted. Functionally, binds heme and transports it to the liver for breakdown and iron recovery, after which the free hemopexin returns to the circulation. In Rattus norvegicus (Rat), this protein is Hemopexin (Hpx).